A 758-amino-acid chain; its full sequence is Long-chain-alcohol oxidase FAO1 (758 aa).

2 helical membrane-spanning segments follow: residues 102–122 (IVLR…LVCL) and 155–175 (PLAR…YFTW). 246–261 (CDAVVVGSGCGGGVAA) contacts FAD. Histidine 689 (proton acceptor) is an active-site residue.

It belongs to the GMC oxidoreductase family.

It localises to the membrane. It catalyses the reaction a long-chain primary fatty alcohol + O2 = a long-chain fatty aldehyde + H2O2. Functionally, long-chain fatty alcohol oxidase involved in the omega-oxidation pathway of lipid degradation. This Arabidopsis thaliana (Mouse-ear cress) protein is Long-chain-alcohol oxidase FAO1 (FAO1).